The sequence spans 228 residues: Endonuclease V (228 aa).

2 residues coordinate Mg(2+): Asp-36 and Asp-104.

Belongs to the endonuclease V family. Mg(2+) serves as cofactor.

It is found in the cytoplasm. It catalyses the reaction Endonucleolytic cleavage at apurinic or apyrimidinic sites to products with a 5'-phosphate.. DNA repair enzyme involved in the repair of deaminated bases. Selectively cleaves double-stranded DNA at the second phosphodiester bond 3' to a deoxyinosine leaving behind the intact lesion on the nicked DNA. This chain is Endonuclease V, found in Serratia proteamaculans (strain 568).